Reading from the N-terminus, the 468-residue chain is Citrate synthase, mitochondrial (468 aa).

The transit peptide at 1-30 (MSLISAGRVCARILGAKNSPCALIAARQAS) directs the protein to the mitochondrion. Residues His303 and His349 contribute to the active site. An oxaloacetate-binding site is contributed by Arg358. The active site involves Asp404. The oxaloacetate site is built by Arg430 and Arg450.

It belongs to the citrate synthase family. In terms of assembly, homodimer.

The protein resides in the mitochondrion matrix. The catalysed reaction is oxaloacetate + acetyl-CoA + H2O = citrate + CoA + H(+). The protein operates within carbohydrate metabolism; tricarboxylic acid cycle; isocitrate from oxaloacetate: step 1/2. Its function is as follows. Key enzyme of the Krebs tricarboxylic acid cycle which catalyzes the synthesis of citrate from acetyl coenzyme A and oxaloacetate. This chain is Citrate synthase, mitochondrial (cs), found in Xenopus laevis (African clawed frog).